Reading from the N-terminus, the 506-residue chain is Maturase K (506 aa).

It belongs to the intron maturase 2 family. MatK subfamily.

The protein resides in the plastid. It is found in the chloroplast. In terms of biological role, usually encoded in the trnK tRNA gene intron. Probably assists in splicing its own and other chloroplast group II introns. This is Maturase K from Trifolium beckwithii (Beckwith's clover).